We begin with the raw amino-acid sequence, 908 residues long: MYRLEDTNSGGVMDKNKQKLSAYGSSGGSVDAAQGSGSGGGRQRHAPLYGRFVDAEDLPATHRDVMHHHSSPSSSSEVRAMQARIPNHFREPASGPLRKLSVDLIKTYKHINEVYYAKKKRRAQQTQGDDDSSNKKERKLYNDGYDDDNHDYIIKNGEKFLDRYEIDSLIGKGSFGQVVKAYDHEEQCHVAIKIIKNKKPFLNQAQIEVKLLEMMNRADAENKYYIVKLKRHFMWRNHLCLVFELLSYNLYDLLRNTNFRGVSLNLTRKFAQQLCTALLFLSTPELNIIHCDLKPENILLCNPKRSAIKIVDFGSSCQLGQRIYHYIQSRFYRSPEVLLGIQYDLAIDMWSLGCILVEMHTGEPLFSGCNEVDQMNKIVEVLGMPPKYLLDQAHKTRKFFDKIVADGSYVLKKNQNGRKYKPPGSRKLHDILGVETGGPGGRRLDEPGHSVSDYLKFKDLILRMLDFDPKTRVTPYYALQHNFFKRTADEATNTSGAGATANAGAGGSGSSGAGGSSGGGVGGGLGASNSSSGAVSSSSAAAPTAATAAATAAGSSGSGSSVGGGSSAAQQQQAMPLPLPLPLPLPPLAGPGGASDGQCHGLLMHSVAANAMNNFSALSLQSNAHPPPSLANSHHSTNSLGSLNHISPGSTGCHNNNSNSSNNNTRHSRLYGSNMVNMVGHHNSGSSNNHNSISYPHAMECDPPQMPPPPPNGHGRMRVPAIMQLQPNSYAPNSVPYYGNMSSSSVAAAAAAAAAAASHLMMTDSSVISASAAGGGQGGGNPGQNPVTPSAAAFLFPSQPAGTLYGTALGSLSDLPLPMPLPMSVPLQLPPSSSSSVSSGSASVGSGGVGVGVVGQRRHITGPAAQVGISQSVGSGSSGSATGASSSDASSSSPMVGVCVQQNPVVIH.

Disordered stretches follow at residues 1–46 (MYRL…QRHA) and 119–143 (KKRR…LYND). The short motif at 121 to 139 (RRAQQTQGDDDSSNKKERK) is the Bipartite nuclear localization signal element. A compositionally biased stretch (basic and acidic residues) spans 132 to 141 (SSNKKERKLY). The Protein kinase domain maps to 164 to 484 (YEIDSLIGKG…PYYALQHNFF (321 aa)). ATP-binding positions include 170–178 (IGKGSFGQV), Lys-193, and 243–246 (FELL). Asp-292 acts as the Proton acceptor in catalysis. 3 disordered regions span residues 552 to 592 (AAGS…AGPG), 623 to 669 (NAHP…RHSR), and 863 to 895 (PAAQ…SSPM). The segment covering 556–566 (SGSGSSVGGGS) has biased composition (gly residues). Residues 567 to 576 (SAAQQQQAMP) are compositionally biased toward low complexity. A compositionally biased stretch (pro residues) spans 577 to 589 (LPLPLPLPLPPLA). Residues 623-654 (NAHPPPSLANSHHSTNSLGSLNHISPGSTGCH) show a composition bias toward polar residues. Low complexity-rich tracts occupy residues 655–664 (NNNSNSSNNN) and 868–893 (GISQ…SSSS).

This sequence belongs to the protein kinase superfamily. CMGC Ser/Thr protein kinase family. MNB/DYRK subfamily. In terms of tissue distribution, in ventral nerve cord and supraesophageal ganglion of embryos. Is most prominent in the mushroom body neuropil and the outer proliferation center of the optic lobes in third instar larvae.

The protein resides in the nucleus. It carries out the reaction L-seryl-[protein] + ATP = O-phospho-L-seryl-[protein] + ADP + H(+). The catalysed reaction is L-threonyl-[protein] + ATP = O-phospho-L-threonyl-[protein] + ADP + H(+). It catalyses the reaction L-tyrosyl-[protein] + ATP = O-phospho-L-tyrosyl-[protein] + ADP + H(+). Functionally, role in the specific control of proper proliferation of optic lobe neuronal progeny. This Drosophila melanogaster (Fruit fly) protein is Serine/threonine-protein kinase minibrain (mnb).